The following is a 317-amino-acid chain: Pectinesterase 31 (317 aa).

Residues T91 and Q121 each contribute to the substrate site. The Proton donor role is filled by D144. D165 serves as the catalytic Nucleophile. R222 and W224 together coordinate substrate.

The protein belongs to the pectinesterase family. As to expression, expressed in siliques.

The enzyme catalyses [(1-&gt;4)-alpha-D-galacturonosyl methyl ester](n) + n H2O = [(1-&gt;4)-alpha-D-galacturonosyl](n) + n methanol + n H(+). It participates in glycan metabolism; pectin degradation; 2-dehydro-3-deoxy-D-gluconate from pectin: step 1/5. Its activity is regulated as follows. Does not require salt for activity. Not inhibited by kiwi pectin methylesterase inhibitor (PMEI). Functionally, acts in the modification of cell walls via demethylesterification of cell wall pectin. Acts in a blockwise manner, resulting in a cell wall rigidification. The chain is Pectinesterase 31 (PME31) from Arabidopsis thaliana (Mouse-ear cress).